Reading from the N-terminus, the 464-residue chain is Protein ABHD18 (464 aa).

An N-terminal signal peptide occupies residues 1 to 24 (MGVSKLDILYRRLLLTKLFIRGWG). Asn341 carries N-linked (GlcNAc...) asparagine glycosylation.

It belongs to the AB hydrolase superfamily.

The protein localises to the secreted. The chain is Protein ABHD18 from Rattus norvegicus (Rat).